A 607-amino-acid chain; its full sequence is MAKVVGIDLGTTNSVIAVMEGGQPTVVPNSEGFRTTPSVVAYTKNGDLLVGQIAKRQAVINPGNTFYSVKRFIGRKFSEIEQEAKQVPYPVQADGKGNVRIFCSAKDKFFAPEEISAQVLRKLVDSASQYLGEKVTQAVITVPAYFNDSQRQATKDAGKIAGLDVLRIINEPTAASLAYGLDKKSNEKILVFDLGGGTFDVSILEIGDGVFEVLATSGDTHLGGDDFDKKIVDWLIDNWKRIEGIDLSKDKQALQRLTEAAEKAKIELSNVTQTDINLPFITATADGPKHLDQTLTRAQFEQLTSDLIERCRKPVEQALTDAKLSKQDIDEVVLVGGSTRIPAVQQLVKDLLGKQPNQSVNPDEVVAIGAAIQAGVLAGEVKNILLLDVCPLSLGVETLGGIMTKMIPRNTTIPTRKTEIYSTAVDNQTNVEIHVLQGERELAKDNKSLGTFRLDGIPPAPRGVPQIEVTFDIDANGILSVTAKERSTGKQQSITITGASTLDQSEIERMVKEAEKNAEEDRKKREQIETKNLAESVYYQAEKMGLKDNAQELKNAIDQLDYEGMKNLTQQVQTLIAQKASETSNAKTNGKASEKEDVIDADFKAQE.

A compositionally biased stretch (polar residues) spans 579–591 (KASETSNAKTNGK). A disordered region spans residues 579 to 607 (KASETSNAKTNGKASEKEDVIDADFKAQE). Basic and acidic residues predominate over residues 592-607 (ASEKEDVIDADFKAQE).

It belongs to the heat shock protein 70 family.

Its subcellular location is the plastid. The protein localises to the chloroplast. Functionally, acts as a chaperone. The protein is Chaperone protein dnaK of Cyanidioschyzon merolae (strain NIES-3377 / 10D) (Unicellular red alga).